A 330-amino-acid chain; its full sequence is Olfactory receptor 5P70 (330 aa).

At 1-28 (MAFLEDGNHTIVTEFILLGLTDDPVLRD) the chain is on the extracellular side. Asn8 is a glycosylation site (N-linked (GlcNAc...) asparagine). Residues 29-49 (ILFTIILCIYLVTVSGNLSTI) form a helical membrane-spanning segment. The Cytoplasmic portion of the chain corresponds to 50–57 (LLIRVSSQ). The helical transmembrane segment at 58-78 (LHHPMYFFLSHLASVDIGISS) threads the bilayer. The Extracellular segment spans residues 79–102 (SVTPNMLANFLVKPNTISYIGCSI). Cys100 and Cys192 are joined by a disulfide. A helical transmembrane segment spans residues 103–123 (QFTSAVFLATVECFLLAAMAY). The Cytoplasmic segment spans residues 124–136 (DRFVAICNPLLYS). A helical membrane pass occupies residues 137–157 (TKMSREACIQLVVGSYIQGLL). Topologically, residues 158–199 (NASFFTLSFFSLIFCGPNRINHFYCDLAPLVELSCSDVTLAV) are extracellular. Residues 200–220 (VITSISAGFITLTTVFVIAIS) traverse the membrane as a helical segment. Topologically, residues 221–240 (YSCIFITIMKMHSTESRYKA) are cytoplasmic. A helical transmembrane segment spans residues 241 to 261 (FSTCTSHLTAVTLFYGTTMFI). At 262-274 (YVMPKSSYSTDQN) the chain is on the extracellular side. A helical membrane pass occupies residues 275–295 (KVLSVFYMVVIPMLNPLIYSL). Residues 296-330 (RNNEIKGALKRYLGKKIFSYGNLFCKTHYNDTHQV) lie on the Cytoplasmic side of the membrane.

This sequence belongs to the G-protein coupled receptor 1 family.

The protein localises to the cell membrane. Potential odorant receptor. The protein is Olfactory receptor 5P70 of Mus musculus (Mouse).